A 273-amino-acid chain; its full sequence is ATP synthase subunit a (273 aa).

A run of 5 helical transmembrane segments spans residues 44 to 64, 104 to 124, 149 to 169, 223 to 243, and 244 to 264; these read WHIDSLLFSVGLGVLFLWLFY, IAPLALTIFIWVFLMNFMDLI, DLNVTLGLSLSVFVLIVFYSI, LIFILIALMPWWAQFALSVPW, and AIFHILIIVLQAFIFMMLTIV.

This sequence belongs to the ATPase A chain family. F-type ATPases have 2 components, CF(1) - the catalytic core - and CF(0) - the membrane proton channel. CF(1) has five subunits: alpha(3), beta(3), gamma(1), delta(1), epsilon(1). CF(0) has three main subunits: a(1), b(2) and c(9-12). The alpha and beta chains form an alternating ring which encloses part of the gamma chain. CF(1) is attached to CF(0) by a central stalk formed by the gamma and epsilon chains, while a peripheral stalk is formed by the delta and b chains.

It localises to the cell inner membrane. Key component of the proton channel; it plays a direct role in the translocation of protons across the membrane. This Shewanella putrefaciens (strain CN-32 / ATCC BAA-453) protein is ATP synthase subunit a.